Consider the following 81-residue polypeptide: Large ribosomal subunit protein uL24 (81 aa).

Belongs to the universal ribosomal protein uL24 family. Part of the 50S ribosomal subunit.

One of two assembly initiator proteins, it binds directly to the 5'-end of the 23S rRNA, where it nucleates assembly of the 50S subunit. Functionally, one of the proteins that surrounds the polypeptide exit tunnel on the outside of the subunit. The chain is Large ribosomal subunit protein uL24 from Chloroherpeton thalassium (strain ATCC 35110 / GB-78).